The primary structure comprises 174 residues: Amino-acid acetyltransferase (174 aa).

The N-acetyltransferase domain maps to 10-148 (PVVRRARTSD…VFDEMCRSYD (139 aa)).

It belongs to the acetyltransferase family. Homodimer and homotetramer.

It carries out the reaction L-glutamate + acetyl-CoA = N-acetyl-L-glutamate + CoA + H(+). The protein operates within amino-acid biosynthesis; L-arginine biosynthesis; N(2)-acetyl-L-ornithine from L-glutamate: step 1/4. Its activity is regulated as follows. Inhibited by L-arginine. Functionally, catalyzes the conversion of L-glutamate to alpha-N-acetyl-L-glutamate. L-glutamine is a significantly better substrate compared to L-glutamate. The protein is Amino-acid acetyltransferase (argA) of Mycobacterium tuberculosis (strain ATCC 25618 / H37Rv).